The sequence spans 326 residues: GMP reductase (326 aa).

C175 (thioimidate intermediate) is an active-site residue. 204 to 227 (IIADGGIRTHGDIAKSVRFGATMV) provides a ligand contact to NADP(+).

The protein belongs to the IMPDH/GMPR family. GuaC type 2 subfamily.

It catalyses the reaction IMP + NH4(+) + NADP(+) = GMP + NADPH + 2 H(+). In terms of biological role, catalyzes the irreversible NADPH-dependent deamination of GMP to IMP. It functions in the conversion of nucleobase, nucleoside and nucleotide derivatives of G to A nucleotides, and in maintaining the intracellular balance of A and G nucleotides. The polypeptide is GMP reductase (Bacillus licheniformis (strain ATCC 14580 / DSM 13 / JCM 2505 / CCUG 7422 / NBRC 12200 / NCIMB 9375 / NCTC 10341 / NRRL NRS-1264 / Gibson 46)).